The sequence spans 182 residues: Adenylate kinase (182 aa).

12 to 17 (GAGKGT) contributes to the ATP binding site. The NMP stretch occupies residues 32 to 61 (STGELLRKEIEMNTNLGIQVKDIMNRGELV). Residues Thr33, Arg38, 59 to 61 (ELV), 85 to 88 (GYPR), and Gln92 contribute to the AMP site. An LID region spans residues 126-132 (LRGRKDD). Arg127 lines the ATP pocket. The AMP site is built by Arg129 and Arg140. ATP is bound at residue Arg168.

The protein belongs to the adenylate kinase family. As to quaternary structure, monomer.

Its subcellular location is the cytoplasm. It catalyses the reaction AMP + ATP = 2 ADP. The protein operates within purine metabolism; AMP biosynthesis via salvage pathway; AMP from ADP: step 1/1. Catalyzes the reversible transfer of the terminal phosphate group between ATP and AMP. Plays an important role in cellular energy homeostasis and in adenine nucleotide metabolism. The chain is Adenylate kinase from Prochlorococcus marinus (strain AS9601).